A 364-amino-acid polypeptide reads, in one-letter code: Urease accessory protein UreD (364 aa).

Disordered regions lie at residues 1 to 37 and 201 to 250; these read MDQD…SSPA and PPEV…AGER. Composition is skewed to low complexity over residues 21-37, 209-218, and 236-248; these read AGSA…SSPA, APDRGAPAAE, and AASS…APAG.

It belongs to the UreD family. As to quaternary structure, ureD, UreF and UreG form a complex that acts as a GTP-hydrolysis-dependent molecular chaperone, activating the urease apoprotein by helping to assemble the nickel containing metallocenter of UreC. The UreE protein probably delivers the nickel.

It localises to the cytoplasm. Its function is as follows. Required for maturation of urease via the functional incorporation of the urease nickel metallocenter. The polypeptide is Urease accessory protein UreD (Kocuria rhizophila (strain ATCC 9341 / DSM 348 / NBRC 103217 / DC2201)).